Reading from the N-terminus, the 472-residue chain is Ribosomal protein uS12 methylthiotransferase RimO (472 aa).

In terms of domain architecture, MTTase N-terminal spans 33 to 143 (NRIGFVSLGC…VLKHVHKYVP (111 aa)). [4Fe-4S] cluster contacts are provided by Cys42, Cys78, Cys107, Cys175, Cys179, and Cys182. One can recognise a Radical SAM core domain in the interval 161 to 398 (LTPKHYAYLK…MEVQAEISAE (238 aa)). The 67-residue stretch at 401-467 (ARFVGRTLDI…EHDLWAEVVD (67 aa)) folds into the TRAM domain.

It belongs to the methylthiotransferase family. RimO subfamily. [4Fe-4S] cluster serves as cofactor.

The protein resides in the cytoplasm. It catalyses the reaction L-aspartate(89)-[ribosomal protein uS12]-hydrogen + (sulfur carrier)-SH + AH2 + 2 S-adenosyl-L-methionine = 3-methylsulfanyl-L-aspartate(89)-[ribosomal protein uS12]-hydrogen + (sulfur carrier)-H + 5'-deoxyadenosine + L-methionine + A + S-adenosyl-L-homocysteine + 2 H(+). Functionally, catalyzes the methylthiolation of an aspartic acid residue of ribosomal protein uS12. The chain is Ribosomal protein uS12 methylthiotransferase RimO from Shewanella baltica (strain OS185).